The primary structure comprises 466 residues: Glutamyl-tRNA reductase (466 aa).

Substrate contacts are provided by residues 47–50 (TCNR), serine 107, 112–114 (EQQ), and glutamine 118. Catalysis depends on cysteine 48, which acts as the Nucleophile. 194 to 199 (GAGAMS) is a binding site for NADP(+).

This sequence belongs to the glutamyl-tRNA reductase family. In terms of assembly, homodimer.

It carries out the reaction (S)-4-amino-5-oxopentanoate + tRNA(Glu) + NADP(+) = L-glutamyl-tRNA(Glu) + NADPH + H(+). The protein operates within porphyrin-containing compound metabolism; protoporphyrin-IX biosynthesis; 5-aminolevulinate from L-glutamyl-tRNA(Glu): step 1/2. Its function is as follows. Catalyzes the NADPH-dependent reduction of glutamyl-tRNA(Glu) to glutamate 1-semialdehyde (GSA). The polypeptide is Glutamyl-tRNA reductase (Corynebacterium efficiens (strain DSM 44549 / YS-314 / AJ 12310 / JCM 11189 / NBRC 100395)).